Consider the following 464-residue polypeptide: MTHSLTMAAYIVAGVLFILALRGLSNPESARNGNRMGMVGMAIAILTTLLSPSVQAYAWIVLAIAIGGAIGTVIAKKVLMTALPQLVAAFHSLVGMAAVLVATGALLNPEAYGIGSAGAIHAGSLVEMSLGLAVGAITFSGSVIAFGKLQGLIAGKPVTFPMQHPLNAVLGILLVVLLVVFAATESHTAYFALMILAFALGFLLIIPIGGADMPVVISMLNSYSGWAAAGIGFTLGNPLLIIAGALVGSSGAILSYIMCKGMNRSIFNVILGGFGSEGGVAAAGGAAGDRSVKAGSAEDAAFIMKNASKVIIVPGYGMAVAQAQHALREMADVLKKEGVEVSYAIHPVAGRMPGHMNVLLAEANVPYDEVFELEEINSSFQTADVAFVIGANDVTNPAAKTDPSSPIYGMPILDVEKAGTVLFIKRSMASGYAGVENELFFRNNTMMLFGDAKKMTEQIVQAMN.

6 consecutive transmembrane segments (helical) span residues 54–74 (VQAY…GTVI), 86–106 (LVAA…TGAL), 126–146 (VEMS…VIAF), 164–184 (HPLN…FAAT), 191–211 (FALM…IGGA), and 227–247 (AAAG…GALV). NADP(+) contacts are provided by residues 316–317 (YG), 348–353 (VAGRMP), 390–394 (GANDV), 425–432 (KRSMASGY), and 451–452 (DA).

The protein belongs to the PNT beta subunit family. As to quaternary structure, complex of an alpha and a beta chain; in Rhodospirillum, the alpha chain seems to be made of two subunits.

It localises to the cell inner membrane. It carries out the reaction NAD(+) + NADPH + H(+)(in) = NADH + NADP(+) + H(+)(out). The transhydrogenation between NADH and NADP is coupled to respiration and ATP hydrolysis and functions as a proton pump across the membrane. This chain is NAD(P) transhydrogenase subunit beta (pntB), found in Rhodospirillum rubrum (strain ATCC 11170 / ATH 1.1.1 / DSM 467 / LMG 4362 / NCIMB 8255 / S1).